A 356-amino-acid polypeptide reads, in one-letter code: Dual-specificity RNA methyltransferase RlmN (356 aa).

Glutamate 92 serves as the catalytic Proton acceptor. The region spanning 98-327 is the Radical SAM core domain; it reads EKNRGTLCIS…HQGIRTMTRR (230 aa). A disulfide bridge connects residues cysteine 105 and cysteine 337. Residues cysteine 112, cysteine 116, and cysteine 119 each coordinate [4Fe-4S] cluster. S-adenosyl-L-methionine-binding positions include 162 to 163, serine 194, 216 to 218, and asparagine 294; these read GE and SLH. Cysteine 337 (S-methylcysteine intermediate) is an active-site residue.

This sequence belongs to the radical SAM superfamily. RlmN family. [4Fe-4S] cluster serves as cofactor.

Its subcellular location is the cytoplasm. It carries out the reaction adenosine(2503) in 23S rRNA + 2 reduced [2Fe-2S]-[ferredoxin] + 2 S-adenosyl-L-methionine = 2-methyladenosine(2503) in 23S rRNA + 5'-deoxyadenosine + L-methionine + 2 oxidized [2Fe-2S]-[ferredoxin] + S-adenosyl-L-homocysteine. It catalyses the reaction adenosine(37) in tRNA + 2 reduced [2Fe-2S]-[ferredoxin] + 2 S-adenosyl-L-methionine = 2-methyladenosine(37) in tRNA + 5'-deoxyadenosine + L-methionine + 2 oxidized [2Fe-2S]-[ferredoxin] + S-adenosyl-L-homocysteine. Functionally, specifically methylates position 2 of adenine 2503 in 23S rRNA and position 2 of adenine 37 in tRNAs. m2A2503 modification seems to play a crucial role in the proofreading step occurring at the peptidyl transferase center and thus would serve to optimize ribosomal fidelity. The polypeptide is Dual-specificity RNA methyltransferase RlmN (Ruthia magnifica subsp. Calyptogena magnifica).